Here is a 736-residue protein sequence, read N- to C-terminus: MEALIPVINKLQDVFNTVGADIIQLPQIVVVGTQSSGKSSVLESLVGRDLLPRGTGIVTRRPLILQLVHVSQEDKRKTTGEENGVEAEEWGKFLHTKNKLYTDFDEIRQEIENETERISGNNKGVSPEPIHLKIFSPNVVNLTLVDLPGMTKVPVGDQPKDIELQIRELILRFISNPNSIILAVTAANTDMATSEALKISREVDPDGRRTLAVITKLDLMDAGTDAMDVLMGRVIPVKLGIIGVVNRSQLDINNKKSVTDSIRDEYAFLQKKYPSLANRNGTKYLARTLNRLLMHHIRDCLPELKTRINVLAAQYQSLLNSYGEPVDDKSATLLQLITKFATEYCNTIEGTAKYIETSELCGGARICYIFHETFGRTLESVDPLGGLNTIDILTAIRNATGPRPALFVPEVSFELLVKRQIKRLEEPSLRCVELVHEEMQRIIQHCSNYSTQELLRFPKLHDAIVEVVTCLLRKRLPVTNEMVHNLVAIELAYINTKHPDFADACGLMNNNIEEQRRNRLARELPSAVSRDKSSKVPSALAPASQEPSPAASAEADGKLIQDSRRETKNVASGGGGVGDGVQEPTTGNWRGMLKTSKAEELLAEEKSKPIPIMPASPQKGHAVNLLDVPVPVARKLSAREQRDCEVIERLIKSYFLIVRKNIQDSVPKAVMHFLVNHVKDTLQSELVGQLYKSSLLDDLLTESEDMAQRRKEAADMLKALQGASQIIAEIRETHLW.

Met1 is modified (N-acetylmethionine). One can recognise a Dynamin-type G domain in the interval 22-302; that stretch reads IIQLPQIVVV…LMHHIRDCLP (281 aa). The interval 32-39 is G1 motif; the sequence is GTQSSGKS. 32 to 40 lines the GTP pocket; it reads GTQSSGKSS. The interval 58–60 is G2 motif; sequence VTR. Residues 146 to 149 are G3 motif; the sequence is DLPG. Residues 215-218 form a G4 motif region; sequence TKLD. Residues 215-221 and 246-249 each bind GTP; these read TKLDLMD and NRSQ. Residues 245–248 form a G5 motif region; that stretch reads VNRS. The interval 344 to 489 is middle domain; it reads YCNTIEGTAK…NEMVHNLVAI (146 aa). The segment at 448 to 685 is interaction with GSK3B; the sequence is NYSTQELLRF…NHVKDTLQSE (238 aa). Residues 502-569 form a b domain region; that stretch reads ADACGLMNNN…IQDSRRETKN (68 aa). Residues 523 to 590 are disordered; sequence ELPSAVSRDK…VQEPTTGNWR (68 aa). Phosphoserine is present on Ser529. Glycyl lysine isopeptide (Lys-Gly) (interchain with G-Cter in SUMO) cross-links involve residues Lys532 and Lys535. Residues 537 to 554 show a composition bias toward low complexity; it reads PSALAPASQEPSPAASAE. Ser548 carries the post-translational modification Phosphoserine. A compositionally biased stretch (basic and acidic residues) spans 555-568; that stretch reads ADGKLIQDSRRETK. Residues Lys558 and Lys568 each participate in a glycyl lysine isopeptide (Lys-Gly) (interchain with G-Cter in SUMO) cross-link. O-linked (GlcNAc) threonine glycans are attached at residues Thr585 and Thr586. A Glycyl lysine isopeptide (Lys-Gly) (interchain with G-Cter in SUMO) cross-link involves residue Lys594. The residue at position 597 (Lys597) is an N6-acetyllysine; alternate. Residue Lys597 forms a Glycyl lysine isopeptide (Lys-Gly) (interchain with G-Cter in SUMO); alternate linkage. A Glycyl lysine isopeptide (Lys-Gly) (interchain with G-Cter in SUMO) cross-link involves residue Lys606. At Ser607 the chain carries Phosphoserine. A Glycyl lysine isopeptide (Lys-Gly) (interchain with G-Cter in SUMO) cross-link involves residue Lys608. Ser616 is subject to Phosphoserine; by CDK1 and PINK1. Ser637 is subject to Phosphoserine; by CAMK1 and PKA. At Cys644 the chain carries S-nitrosocysteine. Residues 644–735 form the GED domain; sequence CEVIERLIKS…IIAEIRETHL (92 aa). Residues 654–668 are important for homodimerization; the sequence is YFLIVRKNIQDSVPK.

It belongs to the TRAFAC class dynamin-like GTPase superfamily. Dynamin/Fzo/YdjA family. In terms of assembly, homotetramer; dimerizes through the N-terminal GTP-middle region of one molecule binding to the GED domain of another DNM1L molecule. Oligomerizes in a GTP-dependent manner to form membrane-associated tubules with a spiral pattern. Interacts with GSK3B and MARCHF5. Interacts (via the GTPase and B domains) with UBE2I; the interaction promotes sumoylation of DNM1L, mainly in its B domain. Interacts with PPP3CA; the interaction dephosphorylates DNM1L and regulates its transition to mitochondria. Interacts with BCL2L1 isoform BCL-X(L) and CLTA; DNM1L and BCL2L1 isoform BCL-X(L) may form a complex in synaptic vesicles that also contains clathrin and MFF. Interacts with MFF; the interaction is inhibited by C11orf65/MFI. Interacts with FIS1; may form part of a larger protein complex at the endoplasmic reticulum-mitochondrial interface during mitochondrial fission. Interacts with CANX. Interacts with BCAP31. Interacts with MIEF2 and MIEF1; GTP-dependent, regulates GTP hydrolysis and DNM1L oligomerization. Interacts with PGAM5; this interaction leads to dephosphorylation at Ser-656 and activation of GTPase activity and eventually to mitochondria fragmentation. Interacts with RALBP1; during mitosis, recruits DNM1L to the mitochondrion and mediates its activation by the mitotic kinase cyclin B-CDK1. Interacts with FUNDC1; this interaction recruits DNM1L/DRP1 at ER-mitochondria contact sites. In terms of processing, phosphorylation/dephosphorylation events on two sites near the GED domain regulate mitochondrial fission. Phosphorylation on Ser-637 by CAMK1 and PKA inhibits the GTPase activity, leading to a defect in mitochondrial fission promoting mitochondrial elongation. Dephosphorylated on this site by PPP3CA which promotes mitochondrial fission. Phosphorylation on Ser-616 by CDK1 and PINK1 activates the GTPase activity and promotes mitochondrial fission. Phosphorylated in a circadian manner at Ser-637. Dephosphorylated by PGAM5. Post-translationally, sumoylated on various lysine residues within the B domain, probably by MUL1. Sumoylation positively regulates mitochondrial fission. Desumoylated by SENP5 during G2/M transition of mitosis. Appears to be linked to its catalytic activity. S-nitrosylation increases DNM1L dimerization, mitochondrial fission and causes neuronal damage. In terms of processing, ubiquitination by MARCHF5 affects mitochondrial morphology. Post-translationally, O-GlcNAcylation augments the level of the GTP-bound active form of DNM1L and induces translocation from the cytoplasm to mitochondria in cardiomyocytes. It also decreases phosphorylation at Ser-637. In terms of tissue distribution, ubiquitously expressed with highest levels found in skeletal muscles, heart, kidney and brain. Isoform 1 is brain-specific. Isoform 2 and isoform 3 are predominantly expressed in testis and skeletal muscles respectively. Isoform 4 is weakly expressed in brain, heart and kidney. Isoform 5 is dominantly expressed in liver, heart and kidney. Isoform 6 is expressed in neurons.

Its subcellular location is the cytoplasm. It is found in the cytosol. It localises to the golgi apparatus. The protein resides in the endomembrane system. The protein localises to the mitochondrion outer membrane. Its subcellular location is the peroxisome. It is found in the membrane. It localises to the clathrin-coated pit. The protein resides in the cytoplasmic vesicle. The protein localises to the secretory vesicle. Its subcellular location is the synaptic vesicle membrane. It carries out the reaction GTP + H2O = GDP + phosphate + H(+). Its activity is regulated as follows. GTPase activity is increased by binding to phospholipid membranes. Its function is as follows. Functions in mitochondrial and peroxisomal division. Mediates membrane fission through oligomerization into membrane-associated tubular structures that wrap around the scission site to constrict and sever the mitochondrial membrane through a GTP hydrolysis-dependent mechanism. The specific recruitment at scission sites is mediated by membrane receptors like MFF, MIEF1 and MIEF2 for mitochondrial membranes. While the recruitment by the membrane receptors is GTP-dependent, the following hydrolysis of GTP induces the dissociation from the receptors and allows DNM1L filaments to curl into closed rings that are probably sufficient to sever a double membrane. Acts downstream of PINK1 to promote mitochondrial fission in a PRKN-dependent manner. Plays an important role in mitochondrial fission during mitosis. Through its function in mitochondrial division, ensures the survival of at least some types of postmitotic neurons, including Purkinje cells, by suppressing oxidative damage. Required for normal brain development, including that of cerebellum. Facilitates developmentally regulated apoptosis during neural tube formation. Required for a normal rate of cytochrome c release and caspase activation during apoptosis; this requirement may depend upon the cell type and the physiological apoptotic cues. Required for formation of endocytic vesicles. Proposed to regulate synaptic vesicle membrane dynamics through association with BCL2L1 isoform Bcl-X(L) which stimulates its GTPase activity in synaptic vesicles; the function may require its recruitment by MFF to clathrin-containing vesicles. Required for programmed necrosis execution. Rhythmic control of its activity following phosphorylation at Ser-637 is essential for the circadian control of mitochondrial ATP production. Inhibits peroxisomal division when overexpressed. This Homo sapiens (Human) protein is Dynamin-1-like protein.